The chain runs to 878 residues: von Willebrand factor A domain-containing protein DDB_G0267758 (878 aa).

The VIT domain maps to 36–169 (GLFLTENNKK…TVKITLTITS (134 aa)). One can recognise a VWFA domain in the interval 316–496 (EFIFLIDCSG…ISLKPMFSNI (181 aa)). The segment covering 595–623 (SSSSSSSSSSSSSSSSSSSSSSSSSSSSS) has biased composition (low complexity). Disordered regions lie at residues 595-638 (SSSS…HRLS) and 752-774 (SVKK…SKTK). The segment covering 624–635 (TTTATTNQNQIH) has biased composition (polar residues).

The protein is von Willebrand factor A domain-containing protein DDB_G0267758 of Dictyostelium discoideum (Social amoeba).